The primary structure comprises 109 residues: Large ribosomal subunit protein uL24 (109 aa).

This sequence belongs to the universal ribosomal protein uL24 family. As to quaternary structure, part of the 50S ribosomal subunit.

Functionally, one of two assembly initiator proteins, it binds directly to the 5'-end of the 23S rRNA, where it nucleates assembly of the 50S subunit. Its function is as follows. One of the proteins that surrounds the polypeptide exit tunnel on the outside of the subunit. The chain is Large ribosomal subunit protein uL24 from Syntrophotalea carbinolica (strain DSM 2380 / NBRC 103641 / GraBd1) (Pelobacter carbinolicus).